We begin with the raw amino-acid sequence, 308 residues long: MPIKIPDTLPAFETLVHEGVRVMTETAAIRQDIRPLQIGLLNLMPNKIKTEIQMARLVGASPLQVELSLIRIGGHRAKNTPEEHLLSFYQTWEEVRHRKFDGFIITGAPIELLDYEDVTYWNEMQQIFEWTQTNVHSTLNVCWGAMAAIYHFHGVPKYELKEKAFGVYRHRNLSPSSIYLNGFSDDFQVPVSRWTEVRRADIEKHPELEILMESDEMGVCLAHEKAGNRLYMFNHVEYDSTSLADEYFRDVNSGVPIKLPHDYFPHNDPELAPLNRWRSHAHLFFGNWINEIYQTTPYDPQAIGKLAA.

Cys142 functions as the Acyl-thioester intermediate in the catalytic mechanism. Positions 163 and 192 each coordinate substrate. His235 (proton acceptor) is an active-site residue. Glu237 is an active-site residue. Position 249 (Arg249) interacts with substrate.

Belongs to the MetA family.

The protein resides in the cytoplasm. The enzyme catalyses L-homoserine + acetyl-CoA = O-acetyl-L-homoserine + CoA. Its pathway is amino-acid biosynthesis; L-methionine biosynthesis via de novo pathway; O-acetyl-L-homoserine from L-homoserine: step 1/1. Functionally, transfers an acetyl group from acetyl-CoA to L-homoserine, forming acetyl-L-homoserine. This is Homoserine O-acetyltransferase from Agrobacterium fabrum (strain C58 / ATCC 33970) (Agrobacterium tumefaciens (strain C58)).